The primary structure comprises 125 residues: Large ribosomal subunit protein bL12 (125 aa).

Belongs to the bacterial ribosomal protein bL12 family. In terms of assembly, homodimer. Part of the ribosomal stalk of the 50S ribosomal subunit. Forms a multimeric L10(L12)X complex, where L10 forms an elongated spine to which 2 to 4 L12 dimers bind in a sequential fashion. Binds GTP-bound translation factors.

Forms part of the ribosomal stalk which helps the ribosome interact with GTP-bound translation factors. Is thus essential for accurate translation. This is Large ribosomal subunit protein bL12 from Paraburkholderia phymatum (strain DSM 17167 / CIP 108236 / LMG 21445 / STM815) (Burkholderia phymatum).